We begin with the raw amino-acid sequence, 184 residues long: Ribosome-recycling factor (184 aa).

It belongs to the RRF family.

It is found in the cytoplasm. Its function is as follows. Responsible for the release of ribosomes from messenger RNA at the termination of protein biosynthesis. May increase the efficiency of translation by recycling ribosomes from one round of translation to another. This Lachnoclostridium phytofermentans (strain ATCC 700394 / DSM 18823 / ISDg) (Clostridium phytofermentans) protein is Ribosome-recycling factor.